Reading from the N-terminus, the 1018-residue chain is Serine/threonine-protein kinase 31 (1018 aa).

In terms of domain architecture, Tudor spans N78–S137. Residues A298 to T358 are a coiled coil. The Protein kinase domain occupies I711–P1018. ATP-binding positions include M717–M725 and K738. The tract at residues I988–P1018 is disordered.

It belongs to the protein kinase superfamily. Ser/Thr protein kinase family. In terms of tissue distribution, testis specific. Expressed only in male germ cells.

It catalyses the reaction L-seryl-[protein] + ATP = O-phospho-L-seryl-[protein] + ADP + H(+). It carries out the reaction L-threonyl-[protein] + ATP = O-phospho-L-threonyl-[protein] + ADP + H(+). The chain is Serine/threonine-protein kinase 31 (Stk31) from Mus musculus (Mouse).